We begin with the raw amino-acid sequence, 422 residues long: L-cysteine:1D-myo-inositol 2-amino-2-deoxy-alpha-D-glucopyranoside ligase (422 aa).

Cys-43 is a binding site for Zn(2+). Residues 43-46 (CGIT), Thr-58, and 81-83 (NVT) contribute to the L-cysteinyl-5'-AMP site. Positions 45-55 (ITPYDATHLGH) match the 'HIGH' region motif. The segment covering 185–200 (AERGGDPDRPGKRNRL) has biased composition (basic and acidic residues). The segment at 185–221 (AERGGDPDRPGKRNRLDPMLWRGRRPGEPSWPGPRGV) is disordered. Residues 186 to 191 (ERGGDP) carry the 'ERGGDP' region motif. Position 227 (Trp-227) interacts with L-cysteinyl-5'-AMP. A Zn(2+)-binding site is contributed by Cys-231. 249 to 251 (GSD) contacts L-cysteinyl-5'-AMP. His-256 serves as a coordination point for Zn(2+). Ile-288 is a binding site for L-cysteinyl-5'-AMP. Residues 294–298 (KMSKS) carry the 'KMSKS' region motif.

Belongs to the class-I aminoacyl-tRNA synthetase family. MshC subfamily. As to quaternary structure, monomer. Zn(2+) is required as a cofactor.

It catalyses the reaction 1D-myo-inositol 2-amino-2-deoxy-alpha-D-glucopyranoside + L-cysteine + ATP = 1D-myo-inositol 2-(L-cysteinylamino)-2-deoxy-alpha-D-glucopyranoside + AMP + diphosphate + H(+). In terms of biological role, catalyzes the ATP-dependent condensation of GlcN-Ins and L-cysteine to form L-Cys-GlcN-Ins. The chain is L-cysteine:1D-myo-inositol 2-amino-2-deoxy-alpha-D-glucopyranoside ligase from Geodermatophilus obscurus (strain ATCC 25078 / DSM 43160 / JCM 3152 / CCUG 61914 / KCC A-0152 / KCTC 9177 / NBRC 13315 / NRRL B-3577 / G-20).